Here is a 242-residue protein sequence, read N- to C-terminus: Dihydropteridine reductase (242 aa).

Leu12–Ala36 contributes to the NADP(+) binding site. N6-succinyllysine occurs at positions 71, 77, 94, and 100. The active-site Proton acceptor is Tyr148.

It belongs to the short-chain dehydrogenases/reductases (SDR) family. Homodimer.

The enzyme catalyses 5,6,7,8-tetrahydropteridine + NAD(+) = 6,7-dihydropteridine + NADH + H(+). The catalysed reaction is 5,6,7,8-tetrahydropteridine + NADP(+) = 6,7-dihydropteridine + NADPH + H(+). Catalyzes the conversion of quinonoid dihydrobiopterin into tetrahydrobiopterin. The chain is Dihydropteridine reductase (QDPR) from Bos taurus (Bovine).